The following is a 645-amino-acid chain: 1,4-alpha-glucan branching enzyme GlgB (645 aa).

Asp309 functions as the Nucleophile in the catalytic mechanism. Glu352 serves as the catalytic Proton donor. Residues 619–645 (VKTRKGSKKQDGSKTKVRSNVTSRGKR) form a disordered region. Residues 636–645 (RSNVTSRGKR) are compositionally biased toward polar residues.

It belongs to the glycosyl hydrolase 13 family. GlgB subfamily. In terms of assembly, monomer.

The enzyme catalyses Transfers a segment of a (1-&gt;4)-alpha-D-glucan chain to a primary hydroxy group in a similar glucan chain.. It participates in glycan biosynthesis; glycogen biosynthesis. Functionally, catalyzes the formation of the alpha-1,6-glucosidic linkages in glycogen by scission of a 1,4-alpha-linked oligosaccharide from growing alpha-1,4-glucan chains and the subsequent attachment of the oligosaccharide to the alpha-1,6 position. The protein is 1,4-alpha-glucan branching enzyme GlgB of Bacillus cereus (strain ATCC 14579 / DSM 31 / CCUG 7414 / JCM 2152 / NBRC 15305 / NCIMB 9373 / NCTC 2599 / NRRL B-3711).